The chain runs to 207 residues: Alpha-1-acid glycoprotein 2 (207 aa).

A signal peptide spans 1-18 (MALHMILVMVSLLPLLEA). Q19 carries the pyrrolidone carboxylic acid modification. N-linked (GlcNAc...) asparagine glycans are attached at residues N25, N34, N76, N94, and N104. A disulfide bridge connects residues C91 and C184. Residues 188–207 (EKQQLELEKETKKDPEEGQA) are disordered.

It belongs to the calycin superfamily. Lipocalin family. As to expression, expressed by the liver and secreted in plasma.

It localises to the secreted. Functions as a transport protein in the blood stream. Binds various ligands in the interior of its beta-barrel domain. Appears to function in modulating the activity of the immune system during the acute-phase reaction. This chain is Alpha-1-acid glycoprotein 2 (Orm2), found in Mus musculus (Mouse).